Here is a 245-residue protein sequence, read N- to C-terminus: Probable phosphatase YcdX (245 aa).

Zn(2+) is bound by residues H7, H9, H15, H40, E73, H101, H131, D192, and H194.

The protein belongs to the PHP family. As to quaternary structure, homotrimer. It depends on Zn(2+) as a cofactor.

The polypeptide is Probable phosphatase YcdX (Salmonella arizonae (strain ATCC BAA-731 / CDC346-86 / RSK2980)).